The chain runs to 175 residues: Bifunctional protein PyrR (175 aa).

Substrate-binding positions include 40-41 (TR), Arg85, 102-110 (DDVLYTGRT), Arg135, and Val159. The PRPP-binding motif lies at 98-110 (VIIIDDVLYTGRT).

Belongs to the purine/pyrimidine phosphoribosyltransferase family. PyrR subfamily. In terms of assembly, homodimer and homohexamer; in equilibrium.

The catalysed reaction is UMP + diphosphate = 5-phospho-alpha-D-ribose 1-diphosphate + uracil. In terms of biological role, regulates transcriptional attenuation of the pyrimidine nucleotide (pyr) operon by binding in a uridine-dependent manner to specific sites on pyr mRNA. This disrupts an antiterminator hairpin in the RNA and favors formation of a downstream transcription terminator, leading to a reduced expression of downstream genes. Its function is as follows. Also displays a weak uracil phosphoribosyltransferase activity which is not physiologically significant. The sequence is that of Bifunctional protein PyrR from Staphylococcus saprophyticus subsp. saprophyticus (strain ATCC 15305 / DSM 20229 / NCIMB 8711 / NCTC 7292 / S-41).